Here is a 340-residue protein sequence, read N- to C-terminus: Phenylalanine--tRNA ligase alpha subunit (340 aa).

Glu254 provides a ligand contact to Mg(2+).

It belongs to the class-II aminoacyl-tRNA synthetase family. Phe-tRNA synthetase alpha subunit type 1 subfamily. In terms of assembly, tetramer of two alpha and two beta subunits. Requires Mg(2+) as cofactor.

It localises to the cytoplasm. It carries out the reaction tRNA(Phe) + L-phenylalanine + ATP = L-phenylalanyl-tRNA(Phe) + AMP + diphosphate + H(+). The chain is Phenylalanine--tRNA ligase alpha subunit from Acidithiobacillus ferrooxidans (strain ATCC 23270 / DSM 14882 / CIP 104768 / NCIMB 8455) (Ferrobacillus ferrooxidans (strain ATCC 23270)).